The following is an 84-amino-acid chain: Cytochrome b559 subunit alpha (84 aa).

Residues isoleucine 22–phenylalanine 36 form a helical membrane-spanning segment. Position 24 (histidine 24) interacts with heme.

The protein belongs to the PsbE/PsbF family. In terms of assembly, heterodimer of an alpha subunit and a beta subunit. PSII is composed of 1 copy each of membrane proteins PsbA, PsbB, PsbC, PsbD, PsbE, PsbF, PsbH, PsbI, PsbJ, PsbK, PsbL, PsbM, PsbT, PsbX, Psb30/Ycf12, peripheral proteins PsbO, CyanoQ (PsbQ), PsbU, PsbV and a large number of cofactors. It forms dimeric complexes. Requires heme b as cofactor.

It is found in the cell inner membrane. Functionally, this b-type cytochrome is tightly associated with the reaction center of photosystem II (PSII). PSII is a light-driven water:plastoquinone oxidoreductase that uses light energy to abstract electrons from H(2)O, generating O(2) and a proton gradient subsequently used for ATP formation. It consists of a core antenna complex that captures photons, and an electron transfer chain that converts photonic excitation into a charge separation. This is Cytochrome b559 subunit alpha from Gloeobacter violaceus (strain ATCC 29082 / PCC 7421).